We begin with the raw amino-acid sequence, 276 residues long: Elongation factor Ts, mitochondrial (276 aa).

This sequence belongs to the EF-Ts family.

It localises to the mitochondrion. Associates with the EF-Tu.GDP complex and induces the exchange of GDP to GTP. It remains bound to the aminoacyl-tRNA.EF-Tu.GTP complex up to the GTP hydrolysis stage on the ribosome. The sequence is that of Elongation factor Ts, mitochondrial from Leishmania major.